Consider the following 113-residue polypeptide: Phosphoribosyl-ATP pyrophosphatase (113 aa).

It belongs to the PRA-PH family.

It is found in the cytoplasm. The enzyme catalyses 1-(5-phospho-beta-D-ribosyl)-ATP + H2O = 1-(5-phospho-beta-D-ribosyl)-5'-AMP + diphosphate + H(+). The protein operates within amino-acid biosynthesis; L-histidine biosynthesis; L-histidine from 5-phospho-alpha-D-ribose 1-diphosphate: step 2/9. This Janthinobacterium sp. (strain Marseille) (Minibacterium massiliensis) protein is Phosphoribosyl-ATP pyrophosphatase.